We begin with the raw amino-acid sequence, 126 residues long: Larval cuticle protein 2 (126 aa).

An N-terminal signal peptide occupies residues 1–16 (MFKFVMILAVVGVATA). The region spanning 39–100 (ADGFDSSLHT…PSGAWIPTPP (62 aa)) is the Chitin-binding type R&amp;R domain.

Component of the larval cuticle. This chain is Larval cuticle protein 2 (Lcp2), found in Drosophila melanogaster (Fruit fly).